The following is an 879-amino-acid chain: Alanine--tRNA ligase (879 aa).

Residues Lys426–Ser449 form a disordered region. Zn(2+)-binding residues include His566, His570, Cys668, and His672.

It belongs to the class-II aminoacyl-tRNA synthetase family. Zn(2+) is required as a cofactor.

Its subcellular location is the cytoplasm. The enzyme catalyses tRNA(Ala) + L-alanine + ATP = L-alanyl-tRNA(Ala) + AMP + diphosphate. Functionally, catalyzes the attachment of alanine to tRNA(Ala) in a two-step reaction: alanine is first activated by ATP to form Ala-AMP and then transferred to the acceptor end of tRNA(Ala). Also edits incorrectly charged Ser-tRNA(Ala) and Gly-tRNA(Ala) via its editing domain. This chain is Alanine--tRNA ligase, found in Clostridioides difficile (strain 630) (Peptoclostridium difficile).